The primary structure comprises 116 residues: Probable prefoldin subunit 2 (116 aa).

This sequence belongs to the prefoldin subunit beta family. As to quaternary structure, heterohexamer of two PFD-alpha type and four PFD-beta type subunits.

Functionally, binds specifically to cytosolic chaperonin (c-CPN) and transfers target proteins to it. Binds to nascent polypeptide chain and promotes folding in an environment in which there are many competing pathways for nonnative proteins. The chain is Probable prefoldin subunit 2 (pfdn2) from Dictyostelium discoideum (Social amoeba).